We begin with the raw amino-acid sequence, 289 residues long: ATP synthase gamma chain (289 aa).

The protein belongs to the ATPase gamma chain family. F-type ATPases have 2 components, CF(1) - the catalytic core - and CF(0) - the membrane proton channel. CF(1) has five subunits: alpha(3), beta(3), gamma(1), delta(1), epsilon(1). CF(0) has three main subunits: a, b and c.

It is found in the cell inner membrane. Functionally, produces ATP from ADP in the presence of a proton gradient across the membrane. The gamma chain is believed to be important in regulating ATPase activity and the flow of protons through the CF(0) complex. This is ATP synthase gamma chain from Herminiimonas arsenicoxydans.